The following is a 510-amino-acid chain: Bifunctional pantoate ligase/cytidylate kinase (510 aa).

Residues 1–276 form a pantoate--beta-alanine ligase region; sequence MKKVIIRKTE…CGETRLIDHV (276 aa). 29-36 contacts ATP; that stretch reads MGNLHNGH. His-36 (proton donor) is an active-site residue. Gln-61 provides a ligand contact to (R)-pantoate. Residue Gln-61 coordinates beta-alanine. Residue 150 to 153 coordinates ATP; the sequence is GEKD. (R)-pantoate is bound at residue Gln-156. 187–190 contacts ATP; sequence LSSR. The tract at residues 277–510 is cytidylate kinase; that stretch reads FLMKRSPIIA…DKIPKETQIR (234 aa).

This sequence in the N-terminal section; belongs to the pantothenate synthetase family. It in the C-terminal section; belongs to the cytidylate kinase family. Type 1 subfamily.

The protein localises to the cytoplasm. The enzyme catalyses (R)-pantoate + beta-alanine + ATP = (R)-pantothenate + AMP + diphosphate + H(+). It catalyses the reaction CMP + ATP = CDP + ADP. It carries out the reaction dCMP + ATP = dCDP + ADP. It functions in the pathway cofactor biosynthesis; (R)-pantothenate biosynthesis; (R)-pantothenate from (R)-pantoate and beta-alanine: step 1/1. In terms of biological role, catalyzes the condensation of pantoate with beta-alanine in an ATP-dependent reaction via a pantoyl-adenylate intermediate. Catalyzes the transfer of a phosphate group from ATP to either CMP or dCMP to form CDP or dCDP and ADP, respectively. This is Bifunctional pantoate ligase/cytidylate kinase from Prochlorococcus marinus (strain MIT 9312).